The sequence spans 864 residues: N-alpha-acetyltransferase 16, NatA auxiliary subunit (864 aa).

TPR repeat units lie at residues 46–79 (GETL…DVKS), 80–113 (HVCW…DKDN), 148–184 (RASW…PPNK), 224–257 (LLVE…NAEN), 374–407 (LWVQ…TPTL), 409–441 (ELFY…DTAD), and 485–518 (MWFQ…FFEI). A disordered region spans residues 603–638 (QKKAKLEEERKHAERERQQKNQKKKRDEEEEEASGL). Residues 606–621 (AKLEEERKHAERERQQ) show a composition bias toward basic and acidic residues.

Component of the N-terminal acetyltransferase A (NatA) complex composed of NAA10 and NAA16.

In terms of biological role, auxillary subunit of the N-terminal acetyltransferase A (NatA) complex which displays alpha (N-terminal) acetyltransferase activity. The protein is N-alpha-acetyltransferase 16, NatA auxiliary subunit (NAA16) of Homo sapiens (Human).